Consider the following 387-residue polypeptide: Phosphoglycerate kinase (387 aa).

Residues 21–23 (DLN), Arg36, 59–62 (HLGR), Arg113, and Arg146 each bind substrate. ATP is bound by residues Lys197, Glu314, and 340-343 (GGDT).

This sequence belongs to the phosphoglycerate kinase family. As to quaternary structure, monomer.

It is found in the cytoplasm. The enzyme catalyses (2R)-3-phosphoglycerate + ATP = (2R)-3-phospho-glyceroyl phosphate + ADP. It functions in the pathway carbohydrate degradation; glycolysis; pyruvate from D-glyceraldehyde 3-phosphate: step 2/5. The polypeptide is Phosphoglycerate kinase (Pectobacterium carotovorum subsp. carotovorum (strain PC1)).